The chain runs to 142 residues: Transcription antitermination protein NusB (142 aa).

It belongs to the NusB family.

In terms of biological role, involved in transcription antitermination. Required for transcription of ribosomal RNA (rRNA) genes. Binds specifically to the boxA antiterminator sequence of the ribosomal RNA (rrn) operons. The sequence is that of Transcription antitermination protein NusB from Borrelia garinii subsp. bavariensis (strain ATCC BAA-2496 / DSM 23469 / PBi) (Borreliella bavariensis).